The following is a 142-amino-acid chain: Probable signal recognition particle 19 kDa protein (142 aa).

Positions 115-142 (KTRQPGYTAPSVASSSAAAAGKKNKKKK) are disordered. Over residues 123-135 (APSVASSSAAAAG) the composition is skewed to low complexity.

This sequence belongs to the SRP19 family. Component of a signal recognition particle complex that consists of a 7SL RNA molecule of 300 nucleotides and six protein subunits: srpa-72, srpa-68, SRP54, F37F2.2/SRP19, F25G6.8/SRP14 and ZK512.4/SRP9.

Its subcellular location is the cytoplasm. The protein resides in the nucleus. It localises to the nucleolus. Component of the signal recognition particle (SRP) complex, a ribonucleoprotein complex that mediates the cotranslational targeting of secretory and membrane proteins to the endoplasmic reticulum (ER). Binds directly to 7SL RNA. Mediates binding of SRP54 to the SRP complex. The polypeptide is Probable signal recognition particle 19 kDa protein (Caenorhabditis elegans).